The following is a 261-amino-acid chain: Small ribosomal subunit protein uS2 (261 aa).

At S2 the chain carries N-acetylserine. Residues 212 to 261 (QNAAEEAKAEETEEAPAAEAETEWTGETDDVDWADSGATPAAEDAAASNW) form a disordered region. Over residues 222-244 (ETEEAPAAEAETEWTGETDDVDW) the composition is skewed to acidic residues.

The protein belongs to the universal ribosomal protein uS2 family. In terms of assembly, component of the small ribosomal subunit. Mature ribosomes consist of a small (40S) and a large (60S) subunit. The 40S subunit contains about 33 different proteins and 1 molecule of RNA (18S). The 60S subunit contains about 49 different proteins and 3 molecules of RNA (25S, 5.8S and 5S). Interacts with RPS21.

The protein localises to the cytoplasm. Required for the assembly and/or stability of the 40S ribosomal subunit. Required for the processing of the 20S rRNA-precursor to mature 18S rRNA in a late step of the maturation of 40S ribosomal subunits. This Candida tropicalis (Yeast) protein is Small ribosomal subunit protein uS2.